The sequence spans 399 residues: Semaphorin-like protein 139 (399 aa).

A signal peptide spans 1-14 (MIPLLFILFYFTNC). The 385-residue stretch at 15–399 (IEWHKFETSE…IPRMKKILKM (385 aa)) folds into the Sema domain.

Belongs to the semaphorin family. Interacts with host VESPR.

It is found in the secreted. Acts as a semaphorin-like protein and binds to host plexin C1 receptor. May alter the movement of plexin C1-expressing cells including dendritic cells, monocytes, or granulocytes in the proximity of infected cells. May also regulate host cell cytoskeleton of neighboring cells to improve viral infection. The sequence is that of Semaphorin-like protein 139 (EVM139) from Ectromelia virus (strain Moscow) (ECTV).